The primary structure comprises 361 residues: tRNA 2-selenouridine synthase (361 aa).

Positions 14-137 constitute a Rhodanese domain; it reads LIADTPIIDV…LRQTAIQATI (124 aa). The active-site S-selanylcysteine intermediate is the cysteine 97.

It belongs to the SelU family. In terms of assembly, monomer.

The enzyme catalyses 5-methylaminomethyl-2-thiouridine(34) in tRNA + selenophosphate + (2E)-geranyl diphosphate + H2O + H(+) = 5-methylaminomethyl-2-selenouridine(34) in tRNA + (2E)-thiogeraniol + phosphate + diphosphate. It carries out the reaction 5-methylaminomethyl-2-thiouridine(34) in tRNA + (2E)-geranyl diphosphate = 5-methylaminomethyl-S-(2E)-geranyl-thiouridine(34) in tRNA + diphosphate. The catalysed reaction is 5-methylaminomethyl-S-(2E)-geranyl-thiouridine(34) in tRNA + selenophosphate + H(+) = 5-methylaminomethyl-2-(Se-phospho)selenouridine(34) in tRNA + (2E)-thiogeraniol. It catalyses the reaction 5-methylaminomethyl-2-(Se-phospho)selenouridine(34) in tRNA + H2O = 5-methylaminomethyl-2-selenouridine(34) in tRNA + phosphate. Its function is as follows. Involved in the post-transcriptional modification of the uridine at the wobble position (U34) of tRNA(Lys), tRNA(Glu) and tRNA(Gln). Catalyzes the conversion of 2-thiouridine (S2U-RNA) to 2-selenouridine (Se2U-RNA). Acts in a two-step process involving geranylation of 2-thiouridine (S2U) to S-geranyl-2-thiouridine (geS2U) and subsequent selenation of the latter derivative to 2-selenouridine (Se2U) in the tRNA chain. The polypeptide is tRNA 2-selenouridine synthase (Escherichia coli O6:H1 (strain CFT073 / ATCC 700928 / UPEC)).